The primary structure comprises 371 residues: Capsular polysaccharide phosphotransferase cps12A (371 aa).

Belongs to the stealth family.

Functionally, part of a capsular polysaccharide synthesis locus. The polypeptide is Capsular polysaccharide phosphotransferase cps12A (cps12A) (Actinobacillus pleuropneumoniae (Haemophilus pleuropneumoniae)).